The chain runs to 123 residues: Small ribosomal subunit protein uS12c (123 aa).

Belongs to the universal ribosomal protein uS12 family. As to quaternary structure, part of the 30S ribosomal subunit.

The protein resides in the plastid. It is found in the chloroplast. In terms of biological role, with S4 and S5 plays an important role in translational accuracy. Located at the interface of the 30S and 50S subunits. The chain is Small ribosomal subunit protein uS12c (rps12) from Anthoceros angustus (Hornwort).